The primary structure comprises 189 residues: MASYGMGDLKKGLKIEIDGIPFKIVEYQHVKPGKGPAFVRIKIKSFIDGKVLEKTFHAGDKCESPNLEEKQMQYLYDDGENCQFMDTQTYEQVAISDEDVGEAKKWMLDGTMVDVLFHNGKAIGVEVPQVMELKIIETAPNFKGDTQGSNKKPATLETGAVVQIPFHVLEGEIIRVDTVRGEYIERANK.

It belongs to the elongation factor P family.

Its subcellular location is the cytoplasm. Its pathway is protein biosynthesis; polypeptide chain elongation. Functionally, involved in peptide bond synthesis. Stimulates efficient translation and peptide-bond synthesis on native or reconstituted 70S ribosomes in vitro. Probably functions indirectly by altering the affinity of the ribosome for aminoacyl-tRNA, thus increasing their reactivity as acceptors for peptidyl transferase. This chain is Elongation factor P, found in Campylobacter lari (strain RM2100 / D67 / ATCC BAA-1060).